Reading from the N-terminus, the 396-residue chain is Elongation factor Tu (396 aa).

Positions Lys-10–Glu-206 constitute a tr-type G domain. The segment at Gly-19–Thr-26 is G1. Gly-19–Thr-26 is a binding site for GTP. Residue Thr-26 coordinates Mg(2+). The G2 stretch occupies residues Gly-60–Ala-64. A G3 region spans residues Asp-81–Gly-84. GTP-binding positions include Asp-81 to His-85 and Asn-136 to Asp-139. Positions Asn-136 to Asp-139 are G4. Residues Ser-174–Leu-176 are G5.

The protein belongs to the TRAFAC class translation factor GTPase superfamily. Classic translation factor GTPase family. EF-Tu/EF-1A subfamily. Monomer.

The protein resides in the cytoplasm. It catalyses the reaction GTP + H2O = GDP + phosphate + H(+). GTP hydrolase that promotes the GTP-dependent binding of aminoacyl-tRNA to the A-site of ribosomes during protein biosynthesis. In Methylococcus capsulatus (strain ATCC 33009 / NCIMB 11132 / Bath), this protein is Elongation factor Tu.